Consider the following 434-residue polypeptide: Nuclear envelope integral membrane protein 1b (434 aa).

The signal sequence occupies residues 1–29 (MAGEVEGRGCGFSLGVLVTLLVLPLPSLC). The next 5 membrane-spanning stretches (helical) occupy residues 151 to 171 (PRLF…DTLS), 175 to 195 (LFFY…ILVF), 206 to 226 (PFFA…QLVF), 239 to 259 (YLIV…YIYG), and 280 to 300 (LLMY…VIAF). Residues 176-287 (FFYSTGITVG…GLLLMYVSVQ (112 aa)) are a; required for its colocalization with lamins at the nuclear envelope. The Nuclear localization signal motif lies at 317–325 (RKIKLKRAK). Residues 326–395 (PGPPRLLTEE…LTPNEVSVHE (70 aa)) form a b; interaction with ran region. The tract at residues 326–434 (PGPPRLLTEE…PLYPIPRSVF (109 aa)) is interaction with banf1-a and banf1-b. The segment at 368 to 375 (SRIQSPKR) is BAF-binding site (BBS); essential for interaction with banf1-a, banf1-b and ran.

Belongs to the NEMP family. Interacts with banf1-a and banf1-b. Interacts with ran-gtp. Post-translationally, phosphorylated.

The protein localises to the nucleus inner membrane. The protein resides in the nucleus envelope. In concert with ran, required for proper eye development. May be involved in the expression of early eye marker genes. Contributes to nuclear envelope stiffness in germ cells. Required for fertility. Essential for normal erythropoiesis. Required for efficient nuclear envelope opening and enucleation during the late stages of erythroblast maturation. This chain is Nuclear envelope integral membrane protein 1b (nemp1b), found in Xenopus laevis (African clawed frog).